We begin with the raw amino-acid sequence, 367 residues long: DNA replication and repair protein RecF (367 aa).

ATP is bound at residue 30–37 (GANGSGKT).

The protein belongs to the RecF family.

It is found in the cytoplasm. Functionally, the RecF protein is involved in DNA metabolism; it is required for DNA replication and normal SOS inducibility. RecF binds preferentially to single-stranded, linear DNA. It also seems to bind ATP. This chain is DNA replication and repair protein RecF, found in Pseudomonas putida (strain ATCC 47054 / DSM 6125 / CFBP 8728 / NCIMB 11950 / KT2440).